A 446-amino-acid chain; its full sequence is Phosphoglucosamine mutase (446 aa).

The Phosphoserine intermediate role is filled by Ser102. Mg(2+) is bound by residues Ser102, Asp241, Asp243, and Asp245. Ser102 carries the post-translational modification Phosphoserine.

This sequence belongs to the phosphohexose mutase family. The cofactor is Mg(2+). In terms of processing, activated by phosphorylation.

It catalyses the reaction alpha-D-glucosamine 1-phosphate = D-glucosamine 6-phosphate. In terms of biological role, catalyzes the conversion of glucosamine-6-phosphate to glucosamine-1-phosphate. The chain is Phosphoglucosamine mutase from Xylella fastidiosa (strain M12).